The chain runs to 198 residues: Phage-like element PBSX protein XkdA (198 aa).

It to B.subtilis YqaB.

The sequence is that of Phage-like element PBSX protein XkdA (xkdA) from Bacillus subtilis (strain 168).